A 184-amino-acid polypeptide reads, in one-letter code: UPF0398 protein BAA_1648 (184 aa).

It belongs to the UPF0398 family.

The protein is UPF0398 protein BAA_1648 of Bacillus anthracis (strain A0248).